Reading from the N-terminus, the 173-residue chain is NADH-ubiquinone oxidoreductase chain 6 (173 aa).

5 consecutive transmembrane segments (helical) span residues 1–21, 25–45, 53–73, 82–102, and 142–162; these read MTYVMSLFLLGLVLGLVAVAS, PYFGALSLVGVAAFGCGVLIW, LVLFLIYLGGMLVVFAYSAAL, LGSWPVVSVYFGYFFFVFGIL, and GVLLLGAWVLLLTLLVVLELV.

It belongs to the complex I subunit 6 family.

The protein localises to the mitochondrion membrane. The enzyme catalyses a ubiquinone + NADH + 5 H(+)(in) = a ubiquinol + NAD(+) + 4 H(+)(out). Its function is as follows. Core subunit of the mitochondrial membrane respiratory chain NADH dehydrogenase (Complex I) that is believed to belong to the minimal assembly required for catalysis. Complex I functions in the transfer of electrons from NADH to the respiratory chain. The immediate electron acceptor for the enzyme is believed to be ubiquinone. The protein is NADH-ubiquinone oxidoreductase chain 6 (MT-ND6) of Tetraodon nigroviridis (Spotted green pufferfish).